The following is a 457-amino-acid chain: Serine--tRNA ligase (457 aa).

252 to 254 (TAE) contributes to the L-serine binding site. ATP-binding positions include 283–285 (RKE) and Val299. Glu306 contributes to the L-serine binding site. Residue 370–373 (EMVS) participates in ATP binding. Position 406 (Thr406) interacts with L-serine.

The protein belongs to the class-II aminoacyl-tRNA synthetase family. Type-1 seryl-tRNA synthetase subfamily. As to quaternary structure, homodimer. The tRNA molecule binds across the dimer.

It localises to the cytoplasm. The enzyme catalyses tRNA(Ser) + L-serine + ATP = L-seryl-tRNA(Ser) + AMP + diphosphate + H(+). The catalysed reaction is tRNA(Sec) + L-serine + ATP = L-seryl-tRNA(Sec) + AMP + diphosphate + H(+). It functions in the pathway aminoacyl-tRNA biosynthesis; selenocysteinyl-tRNA(Sec) biosynthesis; L-seryl-tRNA(Sec) from L-serine and tRNA(Sec): step 1/1. In terms of biological role, catalyzes the attachment of serine to tRNA(Ser). Is also able to aminoacylate tRNA(Sec) with serine, to form the misacylated tRNA L-seryl-tRNA(Sec), which will be further converted into selenocysteinyl-tRNA(Sec). This Saccharolobus solfataricus (strain ATCC 35092 / DSM 1617 / JCM 11322 / P2) (Sulfolobus solfataricus) protein is Serine--tRNA ligase.